The following is a 1030-amino-acid chain: Calcium-transporting ATPase 4, plasma membrane-type (1030 aa).

Residues 1 to 157 (MSNLLRDFEV…NRYTEKPARS (157 aa)) are Cytoplasmic-facing. The tract at residues 19 to 30 (ARQRWRSSVSIV) is interaction with calmodulin. Ser28 bears the Phosphoserine mark. Residues 158 to 178 (FLMFVWEALHDITLIILMVCA) form a helical membrane-spanning segment. Topologically, residues 179–196 (VVSIGVGVATEGFPRGMY) are lumenal. A helical transmembrane segment spans residues 197–217 (DGTGILLSILLVVMVTAISDY). Over 218–345 (KQSLQFRDLD…EDETPLQVKL (128 aa)) the chain is Cytoplasmic. The helical transmembrane segment at 346 to 365 (NGVATIIGKIGLSFAVLTFV) threads the bilayer. The Lumenal portion of the chain corresponds to 366 to 395 (VLCIRFVLDKATSGSFTNWSSEDALTLLDY). The chain crosses the membrane as a helical span at residues 396-413 (FAISVTIIVVAVPEGLPL). Residues 414 to 804 (AVTLSLAFAM…RWGRAVYINI (391 aa)) lie on the Cytoplasmic side of the membrane. The active-site 4-aspartylphosphate intermediate is Asp451. 2 residues coordinate Mg(2+): Asp749 and Asp753. Residues 805-823 (QKFVQFQLTVNVVALIINF) form a helical membrane-spanning segment. At 824–834 (VSACITGSAPL) the chain is on the lumenal side. The helical transmembrane segment at 835-855 (TAVQLLWVNMIMDTLGALALA) threads the bilayer. Residues 856 to 875 (TEPPNEGLMKRAPIARTASF) lie on the Cytoplasmic side of the membrane. Residues 876–898 (ITKTMWRNIAGQSVYQLIVLGIL) traverse the membrane as a helical segment. At 899–910 (NFAGKSLLKLDG) the chain is on the lumenal side. A helical transmembrane segment spans residues 911–932 (PDSTAVLNTVIFNSFVFCQVFN). The Cytoplasmic segment spans residues 933–950 (EINSREIEKINVFKGMFN). Residues 951 to 972 (SWVFTWVMTVTVVFQVIIVEFL) traverse the membrane as a helical segment. Over 973–982 (GAFASTVPLS) the chain is Lumenal. Residues 983-1004 (WQHWLLSILIGSLNMIVAVILK) form a helical membrane-spanning segment. Topologically, residues 1005–1030 (CVPVESRHHHDGYDLLPSGPSSSNSA) are cytoplasmic.

This sequence belongs to the cation transport ATPase (P-type) (TC 3.A.3) family. Type IIB subfamily.

It is found in the vacuole membrane. The enzyme catalyses Ca(2+)(in) + ATP + H2O = Ca(2+)(out) + ADP + phosphate + H(+). With respect to regulation, activated by calmodulin. This magnesium-dependent enzyme catalyzes the hydrolysis of ATP coupled with the translocation of calcium from the cytosol into small vacuoles. This Arabidopsis thaliana (Mouse-ear cress) protein is Calcium-transporting ATPase 4, plasma membrane-type (ACA4).